Here is a 301-residue protein sequence, read N- to C-terminus: Glycine--tRNA ligase alpha subunit (301 aa).

The protein belongs to the class-II aminoacyl-tRNA synthetase family. Tetramer of two alpha and two beta subunits.

The protein resides in the cytoplasm. The catalysed reaction is tRNA(Gly) + glycine + ATP = glycyl-tRNA(Gly) + AMP + diphosphate. The chain is Glycine--tRNA ligase alpha subunit from Neisseria meningitidis serogroup C (strain 053442).